We begin with the raw amino-acid sequence, 140 residues long: Trafficking protein particle complex subunit 2-like protein (140 aa).

This sequence belongs to the TRAPP small subunits family. Sedlin subfamily.

This Dictyostelium discoideum (Social amoeba) protein is Trafficking protein particle complex subunit 2-like protein (trappc2l).